Consider the following 842-residue polypeptide: Oxysterol-binding protein-related protein 7 (842 aa).

Residues 1–28 (MDFQERDPPFLPESAQSSKPSSAQQASE) form a disordered region. Residues 14 to 27 (SAQSSKPSSAQQAS) are compositionally biased toward low complexity. The 96-residue stretch at 47 to 142 (PERQEGHLLK…WVAQLRAHRL (96 aa)) folds into the PH domain. Position 171 is a phosphothreonine (threonine 171). Phosphoserine occurs at positions 217, 226, 256, and 272. The disordered stretch occupies residues 330 to 369 (DMHQGSELSRMGVSEASTGQRRLHSLSTSSDTTADSFSSL). The segment covering 354-369 (SLSTSSDTTADSFSSL) has biased composition (low complexity).

Belongs to the OSBP family. Expressed in epithelium of small and large intestines (at protein level). Expressed in stomach, duodenum, jejunum, ascending colon, spleen, thymus, lymph node, trachea and leukocytes.

The protein resides in the cytoplasm. Its subcellular location is the cytosol. It is found in the endoplasmic reticulum membrane. It localises to the cell membrane. This is Oxysterol-binding protein-related protein 7 (OSBPL7) from Homo sapiens (Human).